A 682-amino-acid chain; its full sequence is Heat shock 70 kDa protein 10, mitochondrial (682 aa).

Residues M1–F50 constitute a mitochondrion transit peptide. The tract at residues K646–K682 is disordered. Positions M651–G667 are enriched in gly residues. Over residues P673–K682 the composition is skewed to acidic residues.

The protein belongs to the heat shock protein 70 (TC 1.A.33) family. DnaK subfamily.

The protein localises to the mitochondrion. Its function is as follows. Chaperone involved in the maturation of iron-sulfur [Fe-S] cluster-containing proteins. Has a low intrinsic ATPase activity which is markedly stimulated by HSCB and ISU1. In cooperation with other chaperones, Hsp70s are key components that facilitate folding of de novo synthesized proteins, assist translocation of precursor proteins into organelles, and are responsible for degradation of damaged protein under stress conditions. The chain is Heat shock 70 kDa protein 10, mitochondrial from Arabidopsis thaliana (Mouse-ear cress).